A 213-amino-acid chain; its full sequence is Large ribosomal subunit protein uL1 (213 aa).

It belongs to the universal ribosomal protein uL1 family. Part of the 50S ribosomal subunit.

Its function is as follows. Probably involved in E site tRNA release. Binds directly to 23S rRNA. In terms of biological role, protein L1 is also a translational repressor protein, it controls the translation of the L1 operon by binding to its mRNA. Thus it also controls transcription of L10 and L12 by translational coupling. Unlike the case in E.coli, where the site is in the untranslated mRNA leader, this site is within the L1 protein's structural gene. This is Large ribosomal subunit protein uL1 from Methanococcus vannielii (strain ATCC 35089 / DSM 1224 / JCM 13029 / OCM 148 / SB).